The chain runs to 427 residues: UPF0761 membrane protein Cphamn1_1013 (427 aa).

A run of 6 helical transmembrane segments spans residues 51–71, 107–127, 147–167, 188–208, 218–238, and 251–271; these read LLSL…SPVF, TVPT…ISTI, FTLY…GLVA, ILSY…YMLV, AVSG…WFSF, and GALS…VVAL.

This sequence belongs to the UPF0761 family.

The protein localises to the cell inner membrane. This Chlorobium phaeobacteroides (strain BS1) protein is UPF0761 membrane protein Cphamn1_1013.